A 622-amino-acid chain; its full sequence is Protein FAM234B (622 aa).

The interval Met1–Glu68 is disordered. At Ser16 the chain carries Phosphoserine. Residue Thr26 is modified to Phosphothreonine. Phosphoserine is present on residues Ser30, Ser33, and Ser62. Residues Thr104–Leu124 form a helical membrane-spanning segment.

This sequence belongs to the FAM234 family.

It localises to the membrane. The protein localises to the golgi outpost. It is found in the cytoplasm. The protein resides in the cytoskeleton. Its subcellular location is the microtubule organizing center. The sequence is that of Protein FAM234B from Homo sapiens (Human).